The following is a 102-amino-acid chain: Carboxysome shell protein CcmK3 (102 aa).

Positions Ala-4 to Pro-90 constitute a BMC domain.

The protein belongs to the bacterial microcompartments protein family. CcmK subfamily. Interacts stably with CcmK4, forming heterohexamers that can make dodecamers. Heterohexamers have a 1:2 CcmK3:CcmK4 stoichiometry. Upon expression in E.coli forms oligomers that could be dimers or trimers, but never hexamers; bulky residues in the pore region probably preclude the formation of homohexamers.

It localises to the carboxysome. Its function is as follows. A probably non-essential, minor shell protein of the carboxysome, a polyhedral inclusion where RuBisCO (ribulose bisphosphate carboxylase, rbcL-rbcS) is sequestered. Hexamers form sheets that form the facets of the polyhedral carboxysome. In PCC 7418 there are several CcmK paralogs with presumably functional differences. This subunit probably only makes heterohexamers with CcmK4. Heterohexamers can also make dodecamers, formation depends on buffer conditions. The sequence is that of Carboxysome shell protein CcmK3 from Halothece sp. (strain PCC 7418) (Synechococcus sp. (strain PCC 7418)).